Reading from the N-terminus, the 150-residue chain is Putative antitoxin VapB45 (150 aa).

Residues 124 to 150 form a disordered region; sequence AQRPVAAGRPRPRPQRPVSDRVSDQRR. Residues 141–150 show a composition bias toward basic and acidic residues; it reads VSDRVSDQRR.

It belongs to the phD/YefM antitoxin family.

Its function is as follows. Possibly the antitoxin component of a type II toxin-antitoxin (TA) system. Its cognate toxin is VapC45 (Potential). The protein is Putative antitoxin VapB45 (vapB45) of Mycobacterium tuberculosis (strain CDC 1551 / Oshkosh).